A 332-amino-acid chain; its full sequence is Ketol-acid reductoisomerase (NADP(+)) 1 (332 aa).

Residues 2 to 182 form the KARI N-terminal Rossmann domain; the sequence is AELFYDADAD…GGTRAGVIKT (181 aa). NADP(+)-binding positions include 25–28, S51, S53, and 83–86; these read YGSQ and DPIQ. Residue H108 is part of the active site. NADP(+) is bound at residue G134. One can recognise a KARI C-terminal knotted domain in the interval 183 to 328; sequence TFTEETETDL…KELRKLMSWV (146 aa). Residues D191, E195, E227, and E231 each contribute to the Mg(2+) site. Position 252 (S252) interacts with substrate.

Belongs to the ketol-acid reductoisomerase family. Mg(2+) serves as cofactor.

It catalyses the reaction (2R)-2,3-dihydroxy-3-methylbutanoate + NADP(+) = (2S)-2-acetolactate + NADPH + H(+). The enzyme catalyses (2R,3R)-2,3-dihydroxy-3-methylpentanoate + NADP(+) = (S)-2-ethyl-2-hydroxy-3-oxobutanoate + NADPH + H(+). It participates in amino-acid biosynthesis; L-isoleucine biosynthesis; L-isoleucine from 2-oxobutanoate: step 2/4. It functions in the pathway amino-acid biosynthesis; L-valine biosynthesis; L-valine from pyruvate: step 2/4. Functionally, involved in the biosynthesis of branched-chain amino acids (BCAA). Catalyzes an alkyl-migration followed by a ketol-acid reduction of (S)-2-acetolactate (S2AL) to yield (R)-2,3-dihydroxy-isovalerate. In the isomerase reaction, S2AL is rearranged via a Mg-dependent methyl migration to produce 3-hydroxy-3-methyl-2-ketobutyrate (HMKB). In the reductase reaction, this 2-ketoacid undergoes a metal-dependent reduction by NADPH to yield (R)-2,3-dihydroxy-isovalerate. This Streptomyces coelicolor (strain ATCC BAA-471 / A3(2) / M145) protein is Ketol-acid reductoisomerase (NADP(+)) 1.